Consider the following 77-residue polypeptide: Acyl carrier protein (77 aa).

A Carrier domain is found at 2–77 (SSIDKRIKEI…DAIDYITDHT (76 aa)). An O-(pantetheine 4'-phosphoryl)serine modification is found at Ser37.

It belongs to the acyl carrier protein (ACP) family. 4'-phosphopantetheine is transferred from CoA to a specific serine of apo-ACP by AcpS. This modification is essential for activity because fatty acids are bound in thioester linkage to the sulfhydryl of the prosthetic group.

Its subcellular location is the cytoplasm. Its pathway is lipid metabolism; fatty acid biosynthesis. Functionally, carrier of the growing fatty acid chain in fatty acid biosynthesis. In Geotalea uraniireducens (strain Rf4) (Geobacter uraniireducens), this protein is Acyl carrier protein.